The sequence spans 179 residues: 3-hydroxyanthranilate 3,4-dioxygenase (179 aa).

Arg-47 lines the O2 pocket. His-51, Glu-57, and His-96 together coordinate Fe cation. Glu-57 provides a ligand contact to substrate. Arg-100 and Glu-110 together coordinate substrate. Fe cation-binding residues include Cys-125, Cys-128, Cys-162, and Cys-165.

This sequence belongs to the 3-HAO family. The cofactor is Fe(2+).

The catalysed reaction is 3-hydroxyanthranilate + O2 = (2Z,4Z)-2-amino-3-carboxymuconate 6-semialdehyde. It functions in the pathway cofactor biosynthesis; NAD(+) biosynthesis; quinolinate from L-kynurenine: step 3/3. In terms of biological role, catalyzes the oxidative ring opening of 3-hydroxyanthranilate to 2-amino-3-carboxymuconate semialdehyde, which spontaneously cyclizes to quinolinate. The protein is 3-hydroxyanthranilate 3,4-dioxygenase of Bacillus thuringiensis (strain Al Hakam).